The following is a 326-amino-acid chain: MTGLCGYSAPDMRGLRLIMIPVELLLCYLLLHPVDATSYGKQTNVLMHFPLSLESQTPSSDPLSCQFLHPKSLPGFSHMAPLPKFLVSLALRNALEEAGCQADVWALQLQLYRQGGVNATQVLIQHLRGLQKGRSTERNVSVEALASALQLLAREQQSTGRVGRSLPTEDCENEKEQAVHNVVQLLPGVGTFYNLGTALYYATQNCLGKARERGRDGAIDLGYDLLMTMAGMSGGPMGLAISAALKPALRSGVQQLIQYYQDQKDANISQPETTKEGLRAISDVSDLEETTTLASFISEVVSSAPYWGWAIIKSYDLDPGAGSLEI.

An N-terminal signal peptide occupies residues 1-35 (MTGLCGYSAPDMRGLRLIMIPVELLLCYLLLHPVD). Positions 36 to 164 (ATSYGKQTNV…EQQSTGRVGR (129 aa)) are excised as a propeptide. An N-linked (GlcNAc...) asparagine glycan is attached at N118. O-linked (GalNAc...) threonine glycosylation occurs at T274. At S323 the chain carries Phosphoserine.

This sequence belongs to the apolipoprotein F family. Post-translationally, O-glycosylated with core 1 or possibly core 8 glycans. As to expression, expressed by the liver and secreted in plasma.

It is found in the secreted. Minor apolipoprotein that associates with LDL. Inhibits cholesteryl ester transfer protein (CETP) activity and appears to be an important regulator of cholesterol transport. Also associates to a lesser degree with VLDL, Apo-AI and Apo-AII. This Homo sapiens (Human) protein is Apolipoprotein F (APOF).